Reading from the N-terminus, the 489-residue chain is Protein-export membrane protein SecD (489 aa).

6 consecutive transmembrane segments (helical) span residues 17–37 (VLIV…IPPA), 328–348 (FIQI…AFMV), 356–376 (SIVV…LGIA), 384–404 (LASI…LVVI), 428–448 (LGII…LALM), and 450–470 (LSTL…GVIF).

It belongs to the SecD/SecF family. SecD subfamily. As to quaternary structure, part of the protein translocation apparatus. Forms a complex with SecF.

The protein resides in the cell membrane. Its function is as follows. Involved in protein export. This is Protein-export membrane protein SecD from Methanolacinia petrolearia (strain DSM 11571 / OCM 486 / SEBR 4847) (Methanoplanus petrolearius).